Here is a 367-residue protein sequence, read N- to C-terminus: 3-isopropylmalate dehydrogenase (367 aa).

77–90 serves as a coordination point for NAD(+); sequence GPKYDDLDFSVKPE. Substrate contacts are provided by arginine 97, arginine 107, arginine 135, and aspartate 224. 3 residues coordinate Mg(2+): aspartate 224, aspartate 248, and aspartate 252. 287–299 serves as a coordination point for NAD(+); the sequence is GSAPDIAGQGKAN.

Belongs to the isocitrate and isopropylmalate dehydrogenases family. LeuB type 1 subfamily. Homodimer. Mg(2+) serves as cofactor. It depends on Mn(2+) as a cofactor.

The protein localises to the cytoplasm. The enzyme catalyses (2R,3S)-3-isopropylmalate + NAD(+) = 4-methyl-2-oxopentanoate + CO2 + NADH. It functions in the pathway amino-acid biosynthesis; L-leucine biosynthesis; L-leucine from 3-methyl-2-oxobutanoate: step 3/4. In terms of biological role, catalyzes the oxidation of 3-carboxy-2-hydroxy-4-methylpentanoate (3-isopropylmalate) to 3-carboxy-4-methyl-2-oxopentanoate. The product decarboxylates to 4-methyl-2 oxopentanoate. The polypeptide is 3-isopropylmalate dehydrogenase (Ruegeria pomeroyi (strain ATCC 700808 / DSM 15171 / DSS-3) (Silicibacter pomeroyi)).